Consider the following 444-residue polypeptide: MALMVKAEGGNGGKRWDDGFDYEGVTKIYVRGGLEGIQFIKFDYVKDGKTITGPIHGVSGRGLTQTFEINHLQKEYLLSIEGYYDISTGVIQSIQFKTNQQTSDMMGFNEGTKFSLRSMRGRIIGFHGFADKNLYSLRAYYIRIPATKSAMDGGQNTGRGYDHGGDYDGVRKVYVTFDGTSIRNMRVDYDKVGQVECYEYGVKIGTQNQFTINYPYECITSVGGSYADTQPYRCIVLRSLTFKTSNGRTSVFGKETGTTFLLESQGNAIVGFHGRVGSCVDSIGEYYAPFSPYPPPTEKLEGQGGDGGDSWDDGAFLNVKKVCIGQGQFGIVSVKFEYENDASEVVVGDEHGKATLLGYEEFELDYPSEYITSVEACQDKVMGAETGVLTMLRFKTNIRISPSFGLKAGFNFVLEKEGHKINGFHGKSSSMLHQIGIHVIPITE.

N-acetylalanine is present on Ala-2. 3 Jacalin-type lectin domains span residues Ala-2–Arg-143, Ala-146–Pro-289, and Thr-297–Pro-441.

It belongs to the jacalin lectin family.

The chain is Jacalin-related lectin 42 (JAL42) from Arabidopsis thaliana (Mouse-ear cress).